The sequence spans 207 residues: MSCFVVGLTGGIGSGKSTVADLFVEQGAGLVDTDAIAHELTAAGGAAMPALIAEFGALVATADGAMDRAVMRRQVFADPSARVRLEGILHPLIRQLSAERCRAAASPYVILAVPLLVESGTYRERCDRIVVVDCPESLQIERVMARNGMSADEVKAIMAAQATRQQRLAAANDVVVNDADQAKLYAQVSALHLQYLKLSAEKVKASC.

The DPCK domain occupies 5 to 202; it reads VVGLTGGIGS…LQYLKLSAEK (198 aa). 13 to 18 is a binding site for ATP; sequence GSGKST.

This sequence belongs to the CoaE family.

The protein localises to the cytoplasm. The enzyme catalyses 3'-dephospho-CoA + ATP = ADP + CoA + H(+). The protein operates within cofactor biosynthesis; coenzyme A biosynthesis; CoA from (R)-pantothenate: step 5/5. In terms of biological role, catalyzes the phosphorylation of the 3'-hydroxyl group of dephosphocoenzyme A to form coenzyme A. The sequence is that of Dephospho-CoA kinase from Dechloromonas aromatica (strain RCB).